Consider the following 1373-residue polypeptide: DNA-directed RNA polymerase subunit beta (1373 aa).

The protein belongs to the RNA polymerase beta chain family. As to quaternary structure, the RNAP catalytic core consists of 2 alpha, 1 beta, 1 beta' and 1 omega subunit. When a sigma factor is associated with the core the holoenzyme is formed, which can initiate transcription.

It catalyses the reaction RNA(n) + a ribonucleoside 5'-triphosphate = RNA(n+1) + diphosphate. Functionally, DNA-dependent RNA polymerase catalyzes the transcription of DNA into RNA using the four ribonucleoside triphosphates as substrates. The sequence is that of DNA-directed RNA polymerase subunit beta from Rickettsia massiliae (strain Mtu5).